A 396-amino-acid chain; its full sequence is Alanine racemase (396 aa).

Catalysis depends on lysine 46, which acts as the Proton acceptor; specific for D-alanine. N6-(pyridoxal phosphate)lysine is present on lysine 46. A substrate-binding site is contributed by arginine 145. Tyrosine 280 functions as the Proton acceptor; specific for L-alanine in the catalytic mechanism. Methionine 328 is a substrate binding site.

It belongs to the alanine racemase family. The cofactor is pyridoxal 5'-phosphate.

It catalyses the reaction L-alanine = D-alanine. The protein operates within amino-acid biosynthesis; D-alanine biosynthesis; D-alanine from L-alanine: step 1/1. Catalyzes the interconversion of L-alanine and D-alanine. May also act on other amino acids. This Brucella suis (strain ATCC 23445 / NCTC 10510) protein is Alanine racemase (alr).